We begin with the raw amino-acid sequence, 320 residues long: 3-oxoacyl-[acyl-carrier-protein] reductase 1, chloroplastic (320 aa).

A chloroplast-targeting transit peptide spans 1–60 (MATTVAATKLTSLKAVKKLGFREIRQVRQWSPLQSAMPHFGMLRCGSRQSFATSTVVKAQ). 82-106 (VTGASRGIGKAIALSLGKAGCKVLV) contacts NADP(+). Ser-214 is a binding site for substrate. The active-site Proton acceptor is Tyr-227.

It belongs to the short-chain dehydrogenases/reductases (SDR) family. As to quaternary structure, homotetramer.

Its subcellular location is the plastid. The protein resides in the chloroplast. The catalysed reaction is a (3R)-hydroxyacyl-[ACP] + NADP(+) = a 3-oxoacyl-[ACP] + NADPH + H(+). It participates in lipid metabolism; fatty acid biosynthesis. This Brassica napus (Rape) protein is 3-oxoacyl-[acyl-carrier-protein] reductase 1, chloroplastic (gbkr1).